The sequence spans 351 residues: MLNSNTKDHEDLRIYQIIDANLDRAREGLRVLEDWARFGLGKEKYVEKIKNFRQILGKNHLEVYKQSRNQIEDNCKGLTHQEQLNRKTSEQIISSNSARVQEALRVIEEFSRLHNNELSKIASEIRYEIYTVEIDLLSFSKFKKSEKILKENDLYVITDQKDNLLEIIEEILIAGVKIIQHRFKTGTDQDHLQEAIEIKNLCKRYNSLFIVNDRLDIALASNADGIHLGQDDLDLKTTRKLFGYSKIIGISANNAIDISNALDEGCDYIGIGPVFETTTKKNKKPLGIENIKTLTKDLNIPWFAIGGIKSNNISYLKRNGFKKVALVSELMNSEDPKEDAMMILKELSHEN.

The unknown stretch occupies residues 1-128 (MLNSNTKDHE…SKIASEIRYE (128 aa)). Residues 129–351 (IYTVEIDLLS…MILKELSHEN (223 aa)) form a thiamine-phosphate synthase region. 4-amino-2-methyl-5-(diphosphooxymethyl)pyrimidine is bound by residues 180 to 184 (QHRFK) and Asn-212. Residues Asp-213 and Asp-232 each coordinate Mg(2+). Ser-251 serves as a coordination point for 4-amino-2-methyl-5-(diphosphooxymethyl)pyrimidine. 2-[(2R,5Z)-2-carboxy-4-methylthiazol-5(2H)-ylidene]ethyl phosphate is bound at residue 277–279 (TTT). Lys-280 provides a ligand contact to 4-amino-2-methyl-5-(diphosphooxymethyl)pyrimidine. Gly-307 is a 2-[(2R,5Z)-2-carboxy-4-methylthiazol-5(2H)-ylidene]ethyl phosphate binding site.

Belongs to the thiamine-phosphate synthase family. The cofactor is Mg(2+).

It catalyses the reaction 2-[(2R,5Z)-2-carboxy-4-methylthiazol-5(2H)-ylidene]ethyl phosphate + 4-amino-2-methyl-5-(diphosphooxymethyl)pyrimidine + 2 H(+) = thiamine phosphate + CO2 + diphosphate. The catalysed reaction is 2-(2-carboxy-4-methylthiazol-5-yl)ethyl phosphate + 4-amino-2-methyl-5-(diphosphooxymethyl)pyrimidine + 2 H(+) = thiamine phosphate + CO2 + diphosphate. The enzyme catalyses 4-methyl-5-(2-phosphooxyethyl)-thiazole + 4-amino-2-methyl-5-(diphosphooxymethyl)pyrimidine + H(+) = thiamine phosphate + diphosphate. Its pathway is cofactor biosynthesis; thiamine diphosphate biosynthesis; thiamine phosphate from 4-amino-2-methyl-5-diphosphomethylpyrimidine and 4-methyl-5-(2-phosphoethyl)-thiazole: step 1/1. Functionally, condenses 4-methyl-5-(beta-hydroxyethyl)thiazole monophosphate (THZ-P) and 2-methyl-4-amino-5-hydroxymethyl pyrimidine pyrophosphate (HMP-PP) to form thiamine monophosphate (TMP). The polypeptide is Thiamine-phosphate synthase (Prochlorococcus marinus (strain AS9601)).